A 424-amino-acid chain; its full sequence is Deoxyguanosinetriphosphate triphosphohydrolase-like protein (424 aa).

Positions 1–10 are enriched in pro residues; it reads MEGTAPPTPY. The interval 1-31 is disordered; it reads MEGTAPPTPYDPASVARYAPEPDKRPGRTAF. Positions 20 to 31 are enriched in basic and acidic residues; it reads PEPDKRPGRTAF. The HD domain occupies 70 to 220; the sequence is RLTHSLECAQ…MDWADDVAYS (151 aa).

It belongs to the dGTPase family. Type 2 subfamily.

The sequence is that of Deoxyguanosinetriphosphate triphosphohydrolase-like protein from Streptomyces coelicolor (strain ATCC BAA-471 / A3(2) / M145).